Here is a 533-residue protein sequence, read N- to C-terminus: MSLQPLTAVNCGSLLQPGCSLLQLDGDIFLFGQKGWPRRSCPTGVFGVRLKHGELKLRPISSSNDSCYLPPLRCPALTRLEPHDGHPEGYLIHGGRTPNNEISSSLYLLTLDSRGCNRKVTLRCQERELVGEQPGPRYGHTLSMVQSLGKRACVVFGGRSYMPAGERTTENWNSVVDCPPQVFIIDLEFGCCSAHTLPELTDGQSFHLALARDDYVYFLGGQSLSLDFRPPRVYSLRDGVPEGKPAVSCSTWTPSMSISSAIATRVGPSHEFIILGGYQLETQKRMECSSVVLDDSGINIEPREAPEWTGEIKHNHTWFGGSMGGGSALIGIPSEGRQATPEAHYFYQVCFQKEGEGKGEDGNQVCSQESTDFEDSAPLEDSEELYFGREPHELEDSSEGEGDTYNEEDEEDESQTGYWVKCCLGCQVDPNTWEPYYSTELLRPAMIYCSKGEGGHWVHAQCMELTEGLLVRLSQGNGKYFCLDHGGLPRQEMTPPRQVLSLKRSPMKPQHRKGPMMRRMTPAKKRFFRRLFE.

The disordered stretch occupies residues 358 to 413 (KGEDGNQVCSQESTDFEDSAPLEDSEELYFGREPHELEDSSEGEGDTYNEEDEEDE). The span at 371-384 (TDFEDSAPLEDSEE) shows a compositional bias: acidic residues. Residues 386–395 (YFGREPHELE) are compositionally biased toward basic and acidic residues. A compositionally biased stretch (acidic residues) spans 396–413 (DSSEGEGDTYNEEDEEDE). The PHD-type; atypical zinc-finger motif lies at 419-488 (WVKCCLGCQV…KYFCLDHGGL (70 aa)). 8 residues coordinate Zn(2+): cysteine 422, cysteine 426, cysteine 449, histidine 456, histidine 459, cysteine 462, cysteine 482, and histidine 485. Residues 496-517 (PRQVLSLKRSPMKPQHRKGPMM) are disordered. The segment covering 505–517 (SPMKPQHRKGPMM) has biased composition (basic residues).

This sequence belongs to the RAG2 family. In terms of assembly, component of the RAG complex composed of core components rag1 and rag2.

The protein resides in the nucleus. Its function is as follows. Core component of the RAG complex, a multiprotein complex that mediates the DNA cleavage phase during V(D)J recombination. V(D)J recombination assembles a diverse repertoire of immunoglobulin and T-cell receptor genes in developing B and T lymphocytes through rearrangement of different V (variable), in some cases D (diversity), and J (joining) gene segments. DNA cleavage by the RAG complex occurs in 2 steps: a first nick is introduced in the top strand immediately upstream of the heptamer, generating a 3'-hydroxyl group that can attack the phosphodiester bond on the opposite strand in a direct transesterification reaction, thereby creating 4 DNA ends: 2 hairpin coding ends and 2 blunt, 5'-phosphorylated ends. In the RAG complex, rag2 is not the catalytic component but is required for all known catalytic activities mediated by RAG1. It probably acts as a sensor of chromatin state that recruits the RAG complex to H3K4me3. This chain is V(D)J recombination-activating protein 2 (rag2), found in Oncorhynchus mykiss (Rainbow trout).